Consider the following 300-residue polypeptide: NAD kinase (300 aa).

The active-site Proton acceptor is the aspartate 75. Residues 75 to 76 (DG), 149 to 150 (ND), arginine 177, aspartate 179, 190 to 195 (TAYALS), alanine 214, and glutamine 248 contribute to the NAD(+) site.

The protein belongs to the NAD kinase family. The cofactor is a divalent metal cation.

It localises to the cytoplasm. It carries out the reaction NAD(+) + ATP = ADP + NADP(+) + H(+). In terms of biological role, involved in the regulation of the intracellular balance of NAD and NADP, and is a key enzyme in the biosynthesis of NADP. Catalyzes specifically the phosphorylation on 2'-hydroxyl of the adenosine moiety of NAD to yield NADP. This chain is NAD kinase, found in Burkholderia multivorans (strain ATCC 17616 / 249).